Consider the following 751-residue polypeptide: Myb-related protein A (751 aa).

Residues 1–22 (MAKRSRSEDEDDDLQYADHDYE) are disordered. 3 consecutive HTH myb-type domains span residues 30–81 (KKLW…QKVL), 82–137 (NPEL…NPEV), and 138–188 (KKSS…RRKV). DNA-binding regions (H-T-H motif) lie at residues 58–81 (WTLI…QKVL), 110–133 (WSLI…HNHL), and 161–184 (WAEI…NSTM). Residue Lys199 forms a Glycyl lysine isopeptide (Lys-Gly) (interchain with G-Cter in SUMO2) linkage. A transcriptional activation domain region spans residues 230-294 (IPGYQYVSPD…RLPPQPGSFS (65 aa)). Residues 297–552 (SGSFLMDDSM…IRRSILGTTP (256 aa)) form a negative regulatory domain region. Position 393 is an N6-acetyllysine (Lys393). Residues Lys591 and Lys601 each participate in a glycyl lysine isopeptide (Lys-Gly) (interchain with G-Cter in SUMO2) cross-link.

In terms of assembly, component of the DREAM complex (also named LINC complex) at least composed of E2F4, E2F5, LIN9, LIN37, LIN52, LIN54, MYBL1, MYBL2, RBL1, RBL2, RBBP4, TFDP1 and TFDP2. The complex exists in quiescent cells where it represses cell cycle-dependent genes. It dissociates in S phase when LIN9, LIN37, LIN52 and LIN54 form a subcomplex that binds to MYBL2. As to expression, predominantly in the testis. Very low levels in the ovaries, spleen and brain.

The protein resides in the nucleus. Functionally, transcription factor that specifically recognizes the sequence 5'-YAAC[GT]G-3'. Acts as a master regulator of male meiosis by promoting expression of piRNAs: activates expression of both piRNA precursor RNAs and expression of protein-coding genes involved in piRNA metabolism, such as PIWIL1. The piRNA metabolic process mediates the repression of transposable elements during meiosis by forming complexes composed of piRNAs and Piwi proteins and governs the methylation and subsequent repression of transposons, which is essential for the germline integrity. Transcriptional activator of SOX30. The protein is Myb-related protein A (Mybl1) of Mus musculus (Mouse).